A 176-amino-acid polypeptide reads, in one-letter code: 3-hydroxydecanoyl-[acyl-carrier-protein] dehydratase (176 aa).

The active site involves His-71.

The protein belongs to the thioester dehydratase family. FabA subfamily. Homodimer.

It localises to the cytoplasm. It carries out the reaction a (3R)-hydroxyacyl-[ACP] = a (2E)-enoyl-[ACP] + H2O. The catalysed reaction is (3R)-hydroxydecanoyl-[ACP] = (2E)-decenoyl-[ACP] + H2O. It catalyses the reaction (2E)-decenoyl-[ACP] = (3Z)-decenoyl-[ACP]. Its pathway is lipid metabolism; fatty acid biosynthesis. Necessary for the introduction of cis unsaturation into fatty acids. Catalyzes the dehydration of (3R)-3-hydroxydecanoyl-ACP to E-(2)-decenoyl-ACP and then its isomerization to Z-(3)-decenoyl-ACP. Can catalyze the dehydratase reaction for beta-hydroxyacyl-ACPs with saturated chain lengths up to 16:0, being most active on intermediate chain length. The sequence is that of 3-hydroxydecanoyl-[acyl-carrier-protein] dehydratase from Rhodopseudomonas palustris (strain HaA2).